Consider the following 498-residue polypeptide: ATP synthase subunit beta, chloroplastic (498 aa).

172 to 179 is an ATP binding site; it reads GGAGVGKT.

It belongs to the ATPase alpha/beta chains family. In terms of assembly, F-type ATPases have 2 components, CF(1) - the catalytic core - and CF(0) - the membrane proton channel. CF(1) has five subunits: alpha(3), beta(3), gamma(1), delta(1), epsilon(1). CF(0) has four main subunits: a(1), b(1), b'(1) and c(9-12).

It localises to the plastid. The protein resides in the chloroplast thylakoid membrane. The catalysed reaction is ATP + H2O + 4 H(+)(in) = ADP + phosphate + 5 H(+)(out). Its function is as follows. Produces ATP from ADP in the presence of a proton gradient across the membrane. The catalytic sites are hosted primarily by the beta subunits. The chain is ATP synthase subunit beta, chloroplastic from Nicotiana sp. (Tobacco).